Consider the following 649-residue polypeptide: DNA mismatch repair protein MutL (649 aa).

This sequence belongs to the DNA mismatch repair MutL/HexB family.

In terms of biological role, this protein is involved in the repair of mismatches in DNA. It is required for dam-dependent methyl-directed DNA mismatch repair. May act as a 'molecular matchmaker', a protein that promotes the formation of a stable complex between two or more DNA-binding proteins in an ATP-dependent manner without itself being part of a final effector complex. This chain is DNA mismatch repair protein MutL, found in Streptococcus pneumoniae (strain P1031).